A 142-amino-acid polypeptide reads, in one-letter code: Glutamate-rich protein 2 (142 aa).

2 disordered regions span residues 1–55 (MSKN…HAPL) and 104–142 (EKAQ…CEDG). Over residues 9-27 (EQEKNNEHCPEDINDKLSE) the composition is skewed to basic and acidic residues. Over residues 28–43 (STDDDGEDTSDEDKEE) the composition is skewed to acidic residues. Positions 44–53 (DSNPNKDTHA) are enriched in basic and acidic residues. Residues 109 to 142 (LEEDDDESEEDNSESEGESTEDPSEESSDECEDG) show a composition bias toward acidic residues.

The polypeptide is Glutamate-rich protein 2 (ERICH2) (Bos taurus (Bovine)).